We begin with the raw amino-acid sequence, 148 residues long: UPF0540 protein At1g62000 (148 aa).

The N-terminal stretch at 1–21 (MNATKFVVLLVIGILCAIVTA) is a signal peptide. Residues 123–132 (RANGKVASAS) are compositionally biased toward low complexity. A disordered region spans residues 123–148 (RANGKVASASRVKGSSEKKKGKGKKD).

Belongs to the UPF0540 family.

This chain is UPF0540 protein At1g62000, found in Arabidopsis thaliana (Mouse-ear cress).